Here is a 283-residue protein sequence, read N- to C-terminus: MMRILLFLATNMAVMLVLGIILSVTGIAGNSTGGILIMALLFGFAGSLISLFLSKTMALRSVDGEVITQPRNQTERWLIDTVSRQAQKAGIPMPDVAIYHSPDVNAFATGATKSNSLVAVSTGLLNNMTEAEAEAVLAHEISHISNGDMVTMALLQGVLNTFVIFLSRVIATAVASSRNNNGEETRSSGIYFLVSMVLEMLFGVLASIIAMWFSRYREFRADAGSASLVGKEKMIMALQRLQQLHEPQNLEGSLNAFMINGKRSELFMSHPPLEKRIEALRNL.

The next 2 helical transmembrane spans lie at 4 to 24 (ILLF…ILSV) and 33 to 53 (GGIL…SLFL). His139 contacts Zn(2+). Glu140 is an active-site residue. Position 143 (His143) interacts with Zn(2+). The next 2 helical transmembrane spans lie at 147 to 167 (GDMV…IFLS) and 190 to 210 (IYFL…SIIA). Glu218 is a Zn(2+) binding site.

Belongs to the peptidase M48B family. It depends on Zn(2+) as a cofactor.

It is found in the cell inner membrane. The protein is Protease HtpX of Haemophilus influenzae (strain PittGG).